The chain runs to 957 residues: Vacuolar membrane protease (957 aa).

Residues 1-10 (MARYNPFSFT) lie on the Cytoplasmic side of the membrane. The chain crosses the membrane as a helical span at residues 11-31 (PGPVVFFTTVIYVGLFAALLV). The Vacuolar segment spans residues 32 to 369 (THLTVPDYPS…RVFVVFQLHT (338 aa)). N-linked (GlcNAc...) asparagine glycosylation is found at Asn48, Asn105, and Asn136. The Zn(2+) site is built by His152 and Asp164. Glu198 functions as the Proton acceptor in the catalytic mechanism. Residues Glu199, Glu224, and His297 each coordinate Zn(2+). Residues 370 to 390 (LFALCVTLLVVAPITLIGLTF) traverse the membrane as a helical segment. Residues 391–423 (GLSKADKNYLLARKAFVYSSDDDNPVQLYGWRG) lie on the Cytoplasmic side of the membrane. The chain crosses the membrane as a helical span at residues 424–444 (FFRFPIIFISATAVVVALAYL). The Vacuolar portion of the chain corresponds to 445–450 (LVRFNA). Residues 451-471 (FIIYSSPFAVWSMMLSAWFFV) traverse the membrane as a helical segment. Residues 472 to 490 (AWFFSRGADAMRPSALQRM) lie on the Cytoplasmic side of the membrane. The chain crosses the membrane as a helical span at residues 491–511 (YALIWLFIGSFVLLTIVTVFV). Residues 512-521 (NNYQVVAGYP) are Vacuolar-facing. Residues 522–542 (ALFYFAVVFVAIMLSYLELFF) form a helical membrane-spanning segment. Residues 543-642 (APTKSAYARH…YPGEQEWSGK (100 aa)) are Cytoplasmic-facing. Disordered regions lie at residues 559 to 586 (SRRN…PVAD) and 603 to 627 (FTRY…SQRL). Residues 603–613 (FTRYGSRRDSA) show a composition bias toward basic and acidic residues. Residues 643–663 (LPSWIWIIQLLLLAPLVIVLV) traverse the membrane as a helical segment. At 664–685 (GQVALLLTSALYQTPSDGNSPL) the chain is on the vacuolar side. The helical transmembrane segment at 686–706 (FIYLAIAALSVLLLAPTGPFI) threads the bilayer. The Cytoplasmic portion of the chain corresponds to 707 to 713 (HRFTYHV). A helical membrane pass occupies residues 714–734 (PTFLFLVCLGTVIYNLVAFPF). The Vacuolar portion of the chain corresponds to 735–957 (SRDHRLKVYF…LVEGFKRFEI (223 aa)). Asn782, Asn818, and Asn834 each carry an N-linked (GlcNAc...) asparagine glycan.

Belongs to the peptidase M28 family. Zn(2+) is required as a cofactor.

The protein localises to the vacuole membrane. Functionally, may be involved in vacuolar sorting and osmoregulation. This chain is Vacuolar membrane protease, found in Pyrenophora teres f. teres (strain 0-1) (Barley net blotch fungus).